Reading from the N-terminus, the 839-residue chain is Taste receptor type 1 member 2 (839 aa).

An N-terminal signal peptide occupies residues 1 to 19 (MGPRAKTISSLFFLLWVLA). Over 20-566 (EPAENSDFYL…VFLEWHEAPT (547 aa)) the chain is Extracellular. Residues Asn84, Asn248, Asn292, Asn312, Asn368, Asn428, Asn487, and Asn527 are each glycosylated (N-linked (GlcNAc...) asparagine). The helical transmembrane segment at 567-587 (IAVALLAALGFLSTLAILVIF) threads the bilayer. Residues 588-602 (WRHFQTPIVRSAGGP) are Cytoplasmic-facing. Residues 603–623 (MCFLMLTLLLVAYMVVPVYVG) form a helical membrane-spanning segment. Residues 624-635 (PPKVSTCLCRQA) lie on the Extracellular side of the membrane. A helical membrane pass occupies residues 636-656 (LFPLCFTICISCIAVRSFQIV). Over 657–681 (CAFKMASRFPRAYSYWVRYQGPYVS) the chain is Cytoplasmic. The chain crosses the membrane as a helical span at residues 682 to 702 (MAFITVLKMVIVVIGMLATGL). Topologically, residues 703–727 (SPTTRTDPDDPKITIVSCNPNYRNS) are extracellular. Residues 728-748 (LLFNTSLDLLLSVVGFSFAYM) form a helical membrane-spanning segment. Over 749-760 (GKELPTNYNEAK) the chain is Cytoplasmic. Residues 761 to 781 (FITLSMTFYFTSSVSLCTFMS) form a helical membrane-spanning segment. Residues 782–784 (AYS) lie on the Extracellular side of the membrane. A helical membrane pass occupies residues 785 to 805 (GVLVTIVDLLVTVLNLLAISL). At 806–839 (GYFGPKCYMILFYPERNTPAYFNSMIQGYTMRRD) the chain is on the cytoplasmic side.

It belongs to the G-protein coupled receptor 3 family. TAS1R subfamily. As to quaternary structure, forms heterodimers with TAS1R3.

The protein localises to the cell membrane. In terms of biological role, putative taste receptor. TAS1R2/TAS1R3 recognizes diverse natural and synthetic sweeteners. This chain is Taste receptor type 1 member 2 (TAS1R2), found in Homo sapiens (Human).